Reading from the N-terminus, the 263-residue chain is Aquaporin Lacbi1:233199 (263 aa).

Over 1–17 (MFTLAHHRHAIRKPMAE) the chain is Cytoplasmic. Residues 18-38 (FFGVALLVIFGAGAACQVVLS) form a helical membrane-spanning segment. The Extracellular segment spans residues 39–44 (TNPNSF). Residues 45–65 (LSINFGWAIGIAMGAWISGSI) form a helical membrane-spanning segment. Topologically, residues 66 to 88 (SGGHINPAITIAMATYRGFPWRE) are cytoplasmic. An NPA 1 motif is present at residues 71–73 (NPA). Residues 89 to 109 (VPSYILAQVLGGVVGAALVYA) form a helical membrane-spanning segment. At 110 to 143 (NYIHAIDVFEGGRHIRTQATASLFATYALPYMTQ) the chain is on the extracellular side. Residues 144-164 (VSCFFSEFLATAVLAMMVLAL) form a helical membrane-spanning segment. The Cytoplasmic segment spans residues 165-174 (TDNRNGAPTN). A helical membrane pass occupies residues 175-195 (GLSPFALFVLFIGLGASLGME). At 196–227 (TAYALNPARDFGPRLFLAMAGYGKALFNYRSQ) the chain is on the extracellular side. The short motif at 201-203 (NPA) is the NPA 2 element. Residues 228-248 (YWLWAPIIAPVLGAQAGGLLY) form a helical membrane-spanning segment. The Cytoplasmic portion of the chain corresponds to 249–263 (DTFLYDGDDSPIKWR).

It belongs to the MIP/aquaporin (TC 1.A.8) family.

It localises to the membrane. The enzyme catalyses H2O(in) = H2O(out). Probable water channel required to facilitate the transport of water across membranes. This chain is Aquaporin Lacbi1:233199, found in Laccaria bicolor (strain S238N-H82 / ATCC MYA-4686) (Bicoloured deceiver).